We begin with the raw amino-acid sequence, 97 residues long: UPF0390 protein CNBD1430 (97 aa).

Disordered regions lie at residues 1–57 (MAQG…INNS) and 75–97 (RNVGELESGEGKDGKAKGKGKSR). Over residues 29–46 (GKREVAPKDRQRVLERSQ) the composition is skewed to basic and acidic residues. Residues 48–57 (KQLSSKINNS) show a composition bias toward polar residues.

This sequence belongs to the UPF0390 family.

In Cryptococcus neoformans var. neoformans serotype D (strain B-3501A) (Filobasidiella neoformans), this protein is UPF0390 protein CNBD1430.